The sequence spans 94 residues: Putative pterin-4-alpha-carbinolamine dehydratase (94 aa).

The protein belongs to the pterin-4-alpha-carbinolamine dehydratase family.

It catalyses the reaction (4aS,6R)-4a-hydroxy-L-erythro-5,6,7,8-tetrahydrobiopterin = (6R)-L-erythro-6,7-dihydrobiopterin + H2O. This chain is Putative pterin-4-alpha-carbinolamine dehydratase, found in Mycobacteroides abscessus (strain ATCC 19977 / DSM 44196 / CCUG 20993 / CIP 104536 / JCM 13569 / NCTC 13031 / TMC 1543 / L948) (Mycobacterium abscessus).